We begin with the raw amino-acid sequence, 273 residues long: Dermonecrotic toxin LhSicTox-alphaIA1i (273 aa).

Residue His5 is part of the active site. Mg(2+) is bound by residues Glu25 and Asp27. Residue His41 is the Nucleophile of the active site. 2 disulfide bridges follow: Cys45–Cys51 and Cys47–Cys190. Mg(2+) is bound at residue Asp85.

The protein belongs to the arthropod phospholipase D family. Class II subfamily. Mg(2+) is required as a cofactor. As to expression, expressed by the venom gland.

The protein resides in the secreted. The catalysed reaction is an N-(acyl)-sphingosylphosphocholine = an N-(acyl)-sphingosyl-1,3-cyclic phosphate + choline. It catalyses the reaction an N-(acyl)-sphingosylphosphoethanolamine = an N-(acyl)-sphingosyl-1,3-cyclic phosphate + ethanolamine. The enzyme catalyses a 1-acyl-sn-glycero-3-phosphocholine = a 1-acyl-sn-glycero-2,3-cyclic phosphate + choline. It carries out the reaction a 1-acyl-sn-glycero-3-phosphoethanolamine = a 1-acyl-sn-glycero-2,3-cyclic phosphate + ethanolamine. In terms of biological role, dermonecrotic toxins cleave the phosphodiester linkage between the phosphate and headgroup of certain phospholipids (sphingolipid and lysolipid substrates), forming an alcohol (often choline) and a cyclic phosphate. This toxin acts on sphingomyelin (SM). It may also act on ceramide phosphoethanolamine (CPE), lysophosphatidylcholine (LPC) and lysophosphatidylethanolamine (LPE), but not on lysophosphatidylserine (LPS), and lysophosphatidylglycerol (LPG). It acts by transphosphatidylation, releasing exclusively cyclic phosphate products as second products. Induces dermonecrosis, hemolysis, increased vascular permeability, edema, inflammatory response, and platelet aggregation. This is Dermonecrotic toxin LhSicTox-alphaIA1i from Loxosceles hirsuta (Recluse spider).